A 634-amino-acid polypeptide reads, in one-letter code: Fluorothreonine transaldolase (634 aa).

Pyridoxal 5'-phosphate contacts are provided by Y67, H221, and H247. At K248 the chain carries N6-(pyridoxal phosphate)lysine. A pyridoxal 5'-phosphate-binding site is contributed by R375. The tract at residues 428–456 is disordered; that stretch reads TGDPASAAGPPARERYAPPTAPAGHPARP.

The protein belongs to the SHMT family. Requires pyridoxal 5'-phosphate as cofactor.

It catalyses the reaction fluoroacetaldehyde + L-threonine = 4-fluoro-L-threonine + acetaldehyde. Transaldolase that catalyzes the final step in 4-fluorothreonine biosynthesis. Mediates a L-threonine/fluoroaceldehyde to 4-fluoro-L-threonine/acetaldehyde crossover reaction. Can also convert chloroacetaldehyde into 4-chloro-L-threonine. Does not use glycine as a substrate. This is Fluorothreonine transaldolase from Streptantibioticus cattleyicolor (Streptomyces cattleya).